The chain runs to 71 residues: Large ribosomal subunit protein bL28 (71 aa).

It belongs to the bacterial ribosomal protein bL28 family.

This Finegoldia magna (strain ATCC 29328 / DSM 20472 / WAL 2508) (Peptostreptococcus magnus) protein is Large ribosomal subunit protein bL28.